The following is a 424-amino-acid chain: CinA-like protein (424 aa).

The protein belongs to the CinA family.

The sequence is that of CinA-like protein from Prochlorococcus marinus (strain AS9601).